Here is a 361-residue protein sequence, read N- to C-terminus: Transcription factor TCP10 (361 aa).

One can recognise a TCP domain in the interval 29–87 (RKDRHSKVFTSKGPRDRRVRLSAHTAIQFYDVQDRLGYDRPSKAVDWLIKKAKTAIDKL). Disordered regions lie at residues 220–259 (DLTM…QPSM) and 295–317 (SWDH…SMFA). The segment covering 295-304 (SWDHHQTTSD) has biased composition (basic and acidic residues).

Interacts with AHP1, AHP2 and AHP3. Interacts with SPL. In terms of tissue distribution, mostly detected in lateral organs, such as leaves and flowers. Expressed in cotyledons, particularly in the vascular region, in leaves, roots, stems, buds, flowers and immature siliques.

It localises to the nucleus. Its function is as follows. Plays a pivotal role in the control of morphogenesis of shoot organs by negatively regulating the expression of boundary-specific genes such as CUC genes, probably through the induction of miRNA (e.g. miR164). Participates in ovule development. This chain is Transcription factor TCP10 (TCP10), found in Arabidopsis thaliana (Mouse-ear cress).